The primary structure comprises 351 residues: Phospho-N-acetylmuramoyl-pentapeptide-transferase (351 aa).

The next 10 membrane-spanning stretches (helical) occupy residues 17 to 37, 63 to 83, 85 to 105, 135 to 155, 158 to 178, 190 to 210, 230 to 250, 254 to 274, 279 to 299, and 328 to 348; these read TAYATIFAFLLALIFGPFIIL, IPTMGGILIFFCVLVSLFFWI, LWNVYFLIVLFVMISFACLGF, ISVTMLYYFGGEHISIIYFPF, SLKLDLGVLYIPFGMFILISA, GLAIGLSIVVTGALVIIAYLT, LVIFLGALLGGSFGFLWFNAY, IMMGDTGSLSIGAVLGMTALI, ILFAILAGVFVLETLSVIIQV, and QVVIRFWIIGLIFAIIALSTL.

Belongs to the glycosyltransferase 4 family. MraY subfamily. Mg(2+) is required as a cofactor.

The protein resides in the cell inner membrane. The enzyme catalyses UDP-N-acetyl-alpha-D-muramoyl-L-alanyl-gamma-D-glutamyl-meso-2,6-diaminopimeloyl-D-alanyl-D-alanine + di-trans,octa-cis-undecaprenyl phosphate = di-trans,octa-cis-undecaprenyl diphospho-N-acetyl-alpha-D-muramoyl-L-alanyl-D-glutamyl-meso-2,6-diaminopimeloyl-D-alanyl-D-alanine + UMP. Its pathway is cell wall biogenesis; peptidoglycan biosynthesis. Catalyzes the initial step of the lipid cycle reactions in the biosynthesis of the cell wall peptidoglycan: transfers peptidoglycan precursor phospho-MurNAc-pentapeptide from UDP-MurNAc-pentapeptide onto the lipid carrier undecaprenyl phosphate, yielding undecaprenyl-pyrophosphoryl-MurNAc-pentapeptide, known as lipid I. This chain is Phospho-N-acetylmuramoyl-pentapeptide-transferase, found in Borrelia hermsii (strain HS1 / DAH).